Consider the following 129-residue polypeptide: Modulator protein MzrA (129 aa).

The Cytoplasmic portion of the chain corresponds to 1–14; it reads MINFRGRFGRPLWH. A helical transmembrane segment spans residues 15–35; it reads YLVLPVVLLLLAVILLTPMIV. Topologically, residues 36 to 129 are periplasmic; that stretch reads QTESTLKIRP…VFRSNQQNLG (94 aa).

This sequence belongs to the MzrA family. In terms of assembly, interacts with EnvZ.

It is found in the cell inner membrane. Modulates the activity of the EnvZ/OmpR two-component regulatory system, probably by directly modulating EnvZ enzymatic activity and increasing stability of phosphorylated OmpR. The chain is Modulator protein MzrA from Yersinia pestis (strain Pestoides F).